The chain runs to 840 residues: DNA mismatch repair protein MutS (840 aa).

Residue 601 to 608 coordinates ATP; sequence GPNMSGKS.

Belongs to the DNA mismatch repair MutS family.

In terms of biological role, this protein is involved in the repair of mismatches in DNA. It is possible that it carries out the mismatch recognition step. This protein has a weak ATPase activity. The sequence is that of DNA mismatch repair protein MutS from Lactococcus lactis subsp. cremoris (strain SK11).